Reading from the N-terminus, the 290-residue chain is Small ribosomal subunit biogenesis GTPase RsgA (290 aa).

In terms of domain architecture, CP-type G spans 62 to 213 (KNSLVRPPIV…IADTPGFSSL (152 aa)). GTP contacts are provided by residues 111-114 (SKMD) and 156-164 (GQTGVGKST). Residues C237, C242, H244, and C250 each contribute to the Zn(2+) site.

It belongs to the TRAFAC class YlqF/YawG GTPase family. RsgA subfamily. As to quaternary structure, monomer. Associates with 30S ribosomal subunit, binds 16S rRNA. Zn(2+) is required as a cofactor.

It is found in the cytoplasm. One of several proteins that assist in the late maturation steps of the functional core of the 30S ribosomal subunit. Helps release RbfA from mature subunits. May play a role in the assembly of ribosomal proteins into the subunit. Circularly permuted GTPase that catalyzes slow GTP hydrolysis, GTPase activity is stimulated by the 30S ribosomal subunit. This is Small ribosomal subunit biogenesis GTPase RsgA from Streptococcus pyogenes serotype M3 (strain ATCC BAA-595 / MGAS315).